A 982-amino-acid chain; its full sequence is Chromosome partition protein Smc (982 aa).

Residue 33–40 (PNGSGKSN) participates in ATP binding. Coiled coils occupy residues 171-235 (RYTK…LVAD) and 263-377 (QLQL…NLNQ). Positions 416–535 (TGLLNTLNTF…ASDLQAALKL (120 aa)) constitute an SMC hinge domain. Coiled-coil stretches lie at residues 568–627 (LSLY…ERVN), 669–713 (AERD…RSQL), and 753–818 (IKLS…EIDE).

Belongs to the SMC family. In terms of assembly, homodimer.

It is found in the cytoplasm. Its function is as follows. Required for chromosome condensation and partitioning. The polypeptide is Chromosome partition protein Smc (Mycoplasma pneumoniae (strain ATCC 29342 / M129 / Subtype 1) (Mycoplasmoides pneumoniae)).